The following is a 126-amino-acid chain: Protein ApaG (126 aa).

The region spanning asparagine 2–histidine 126 is the ApaG domain.

This chain is Protein ApaG, found in Shewanella piezotolerans (strain WP3 / JCM 13877).